A 197-amino-acid polypeptide reads, in one-letter code: uncharacterized protein (197 aa).

A signal peptide spans 1–23 (MSARAPKELRLALPPCLLNRTFA). Residues N19 and N26 are each glycosylated (N-linked (GlcNAc...) asparagine). At 24–61 (SPNASGSGNTGARGPGAGGSGTCITQVGQQLFQSFSST) the chain is on the extracellular side. A helical transmembrane segment spans residues 62 to 82 (LVLIVLVTLIFCLIVLSLSTF). The Cytoplasmic segment spans residues 83 to 197 (HIHKRRMKKR…EGLLQTVVLS (115 aa)). The segment at 94–179 (MQRAQEEYER…ASSPQGAHAV (86 aa)) is disordered. Basic and acidic residues-rich tracts occupy residues 96 to 107 (RAQEEYERDHCS) and 125 to 136 (HAKETRLERQPR). The span at 147-161 (SSSSSSSPGLPCQGP) shows a compositional bias: low complexity. Pro residues predominate over residues 162–171 (CAPPPPPPAS).

It localises to the membrane. This is an uncharacterized protein from Pongo abelii (Sumatran orangutan).